The primary structure comprises 325 residues: Sensor histidine kinase YxdK (325 aa).

Residues 1 to 8 are Cytoplasmic-facing; the sequence is MKLFLRSH. Residues 9–29 traverse the membrane as a helical segment; it reads AVLILLFLLQGLFVFFYYWFA. Over 30–33 the chain is Extracellular; that stretch reads GLHS. Residues 34–54 form a helical membrane-spanning segment; it reads FSHLFYILGVQLLILAGYLAY. Residues 55 to 325 lie on the Cytoplasmic side of the membrane; the sequence is RWYKDRGVYH…SVRFSFLTKM (271 aa). The region spanning 118 to 325 is the Histidine kinase domain; it reads QWVHQVKTPL…SVRFSFLTKM (208 aa). His121 carries the post-translational modification Phosphohistidine; by autocatalysis.

Its subcellular location is the cell membrane. It catalyses the reaction ATP + protein L-histidine = ADP + protein N-phospho-L-histidine.. Functionally, probable member of the two-component regulatory system YxdK/YxdJ. May activate YxdJ in response to the antibacterial protein LL-37. In Bacillus subtilis (strain 168), this protein is Sensor histidine kinase YxdK (yxdK).